The sequence spans 345 residues: MDYKTAGVDVKAGRAFVDLIKTSVNETSRPEVIGGIGGFGGFMRLPHGLENPVLVAGTDGVGTKLELAQDYHAHFGVGIDLVAMCVNDVITSGAEPLLFLDYIATGKLAPKDLSEVVKGIAEGCKKSNCVLLGGETAEMPGFYSKGRYDLAGFCLAVVEEKKIIDGSTIKAGDQIIGVQSNGLHSNGFSLVRKVLGMSGANKSILVDTKKTPLIDSLLQPTALYVELVQSLLKHTIPIKGMAHITGGGLPENLPRCLPNGLNAFIEPGSWDIPEIFFWLKKAGHIPEDDWWNTFNLGIGFCLVVSTDQVEAALEICTEIGWDAWTIGRVQEPTVPGQQRLIGLPE.

This sequence belongs to the AIR synthase family.

It localises to the cytoplasm. The catalysed reaction is 2-formamido-N(1)-(5-O-phospho-beta-D-ribosyl)acetamidine + ATP = 5-amino-1-(5-phospho-beta-D-ribosyl)imidazole + ADP + phosphate + H(+). The protein operates within purine metabolism; IMP biosynthesis via de novo pathway; 5-amino-1-(5-phospho-D-ribosyl)imidazole from N(2)-formyl-N(1)-(5-phospho-D-ribosyl)glycinamide: step 2/2. The sequence is that of Phosphoribosylformylglycinamidine cyclo-ligase from Prochlorococcus marinus (strain MIT 9211).